The following is a 360-amino-acid chain: Phosphoserine aminotransferase (360 aa).

R41 is a binding site for L-glutamate. Pyridoxal 5'-phosphate is bound by residues 75-76 (GR), W101, T152, D172, and Q195. Position 196 is an N6-(pyridoxal phosphate)lysine (K196). 237–238 (NT) is a binding site for pyridoxal 5'-phosphate.

The protein belongs to the class-V pyridoxal-phosphate-dependent aminotransferase family. SerC subfamily. Homodimer. The cofactor is pyridoxal 5'-phosphate.

The protein localises to the cytoplasm. It catalyses the reaction O-phospho-L-serine + 2-oxoglutarate = 3-phosphooxypyruvate + L-glutamate. The catalysed reaction is 4-(phosphooxy)-L-threonine + 2-oxoglutarate = (R)-3-hydroxy-2-oxo-4-phosphooxybutanoate + L-glutamate. Its pathway is amino-acid biosynthesis; L-serine biosynthesis; L-serine from 3-phospho-D-glycerate: step 2/3. The protein operates within cofactor biosynthesis; pyridoxine 5'-phosphate biosynthesis; pyridoxine 5'-phosphate from D-erythrose 4-phosphate: step 3/5. Functionally, catalyzes the reversible conversion of 3-phosphohydroxypyruvate to phosphoserine and of 3-hydroxy-2-oxo-4-phosphonooxybutanoate to phosphohydroxythreonine. The protein is Phosphoserine aminotransferase of Pseudoalteromonas translucida (strain TAC 125).